Reading from the N-terminus, the 1261-residue chain is Pentatricopeptide repeat-containing protein 5, mitochondrial (1261 aa).

PPR repeat units lie at residues 365-404 (HPDL…TSMT), 405-442 (NVRS…NQVI), 443-479 (PSSI…TYKA), 480-514 (SPST…RFSD), 550-584 (TNFT…KVSL), 806-849 (HPEV…EKAN), 852-886 (MALI…GYIP), 887-924 (RAST…NVKP), 925-959 (SVFL…GLLP), 960-995 (TSVT…NYQP), 996-1031 (RVAP…DIEP), 1032-1068 (SSHT…DVPI), 1109-1143 (DANL…NVSL), 1144-1179 (NAYI…MSGK), and 1180-1214 (EPST…RYPL). Residues 1225-1261 (NSHMGQKPKRRSLNTSHSSLASLGNASTQHSINSSIN) are disordered. Over residues 1237-1261 (LNTSHSSLASLGNASTQHSINSSIN) the composition is skewed to polar residues.

The protein localises to the mitochondrion. In terms of biological role, mitochondrial RNA-binding protein that acts as a general negative regulator of mitochondrial translation. This chain is Pentatricopeptide repeat-containing protein 5, mitochondrial (ppr5), found in Schizosaccharomyces pombe (strain 972 / ATCC 24843) (Fission yeast).